A 305-amino-acid polypeptide reads, in one-letter code: Mat- sexual cell fertilization-promoting factor (305 aa).

A DNA-binding region (alpha box) is located at residues 38–93; that stretch reads PAKKKVNGFMGYRSYYSSMFSQLPQKERSPILTTLWQQDPFHKEWDFMCAVYSAIR.

Belongs to the MATALPHA1 family.

The protein resides in the nucleus. In terms of biological role, controls fertilization, probably by determining the mating type. May be involved in the post-fertilization steps of the sexual cycle besides mat+. It is required for the developmental events that occur in the female organ after fertilization. This Podospora anserina (Pleurage anserina) protein is Mat- sexual cell fertilization-promoting factor (FMR1).